A 473-amino-acid polypeptide reads, in one-letter code: Bifunctional protein GlmU (473 aa).

A pyrophosphorylase region spans residues 1–240 (MAIHPLDVVI…AAQVAGVNSP (240 aa)). UDP-N-acetyl-alpha-D-glucosamine contacts are provided by residues lysine 25, glutamine 83, 88–89 (GT), 110–112 (SGD), glycine 147, glutamate 165, and asparagine 238. Aspartate 112 provides a ligand contact to Mg(2+). Asparagine 238 lines the Mg(2+) pocket. The interval 241-261 (VQLAELERVYQQRLATTLMEQ) is linker. Positions 262–473 (GVRLADPARL…WARPVKKPGV (212 aa)) are N-acetyltransferase. 2 residues coordinate UDP-N-acetyl-alpha-D-glucosamine: arginine 348 and lysine 366. The active-site Proton acceptor is histidine 378. Residues tyrosine 381 and asparagine 392 each coordinate UDP-N-acetyl-alpha-D-glucosamine. Residues alanine 395, 401–402 (NY), serine 420, glycine 438, and arginine 455 contribute to the acetyl-CoA site.

This sequence in the N-terminal section; belongs to the N-acetylglucosamine-1-phosphate uridyltransferase family. It in the C-terminal section; belongs to the transferase hexapeptide repeat family. As to quaternary structure, homotrimer. The cofactor is Mg(2+).

Its subcellular location is the cytoplasm. It carries out the reaction alpha-D-glucosamine 1-phosphate + acetyl-CoA = N-acetyl-alpha-D-glucosamine 1-phosphate + CoA + H(+). It catalyses the reaction N-acetyl-alpha-D-glucosamine 1-phosphate + UTP + H(+) = UDP-N-acetyl-alpha-D-glucosamine + diphosphate. It functions in the pathway nucleotide-sugar biosynthesis; UDP-N-acetyl-alpha-D-glucosamine biosynthesis; N-acetyl-alpha-D-glucosamine 1-phosphate from alpha-D-glucosamine 6-phosphate (route II): step 2/2. The protein operates within nucleotide-sugar biosynthesis; UDP-N-acetyl-alpha-D-glucosamine biosynthesis; UDP-N-acetyl-alpha-D-glucosamine from N-acetyl-alpha-D-glucosamine 1-phosphate: step 1/1. Its pathway is bacterial outer membrane biogenesis; LPS lipid A biosynthesis. In terms of biological role, catalyzes the last two sequential reactions in the de novo biosynthetic pathway for UDP-N-acetylglucosamine (UDP-GlcNAc). The C-terminal domain catalyzes the transfer of acetyl group from acetyl coenzyme A to glucosamine-1-phosphate (GlcN-1-P) to produce N-acetylglucosamine-1-phosphate (GlcNAc-1-P), which is converted into UDP-GlcNAc by the transfer of uridine 5-monophosphate (from uridine 5-triphosphate), a reaction catalyzed by the N-terminal domain. The polypeptide is Bifunctional protein GlmU (Polaromonas naphthalenivorans (strain CJ2)).